A 217-amino-acid polypeptide reads, in one-letter code: FMN-dependent NADH:quinone oxidoreductase (217 aa).

FMN-binding positions include Ser-10, 17–19, and 137–140; these read SAS and SRGG.

This sequence belongs to the azoreductase type 1 family. Homodimer. The cofactor is FMN.

It carries out the reaction 2 a quinone + NADH + H(+) = 2 a 1,4-benzosemiquinone + NAD(+). The enzyme catalyses N,N-dimethyl-1,4-phenylenediamine + anthranilate + 2 NAD(+) = 2-(4-dimethylaminophenyl)diazenylbenzoate + 2 NADH + 2 H(+). Quinone reductase that provides resistance to thiol-specific stress caused by electrophilic quinones. Its function is as follows. Also exhibits azoreductase activity. Catalyzes the reductive cleavage of the azo bond in aromatic azo compounds to the corresponding amines. In Streptomyces avermitilis (strain ATCC 31267 / DSM 46492 / JCM 5070 / NBRC 14893 / NCIMB 12804 / NRRL 8165 / MA-4680), this protein is FMN-dependent NADH:quinone oxidoreductase.